The chain runs to 166 residues: MAIRYVRKIGDEVLRKKAKPVTEINSHILTILEDMAQTMYLNDGVGLAANQIGVLRRLVVIDVGEGLLELINPEIVYEEGEQVGAEGCLSIPGVVGEVKRPKKVKVKYLDREGKEREIEGEDLLARALCHEIDHLNGVLFIDKAIRFLDEEEKEQVKYFGNMSRGW.

2 residues coordinate Fe cation: Cys-88 and His-130. Residue Glu-131 is part of the active site. His-134 provides a ligand contact to Fe cation.

It belongs to the polypeptide deformylase family. The cofactor is Fe(2+).

It catalyses the reaction N-terminal N-formyl-L-methionyl-[peptide] + H2O = N-terminal L-methionyl-[peptide] + formate. In terms of biological role, removes the formyl group from the N-terminal Met of newly synthesized proteins. Requires at least a dipeptide for an efficient rate of reaction. N-terminal L-methionine is a prerequisite for activity but the enzyme has broad specificity at other positions. In Thermoanaerobacter sp. (strain X514), this protein is Peptide deformylase.